The chain runs to 261 residues: Zinc finger protein 664 (261 aa).

C2H2-type zinc fingers lie at residues 3 to 25, 31 to 53, 59 to 81, 87 to 109, 115 to 137, 143 to 165, 171 to 193, 199 to 221, and 227 to 249; these read YKCP…QKIH, HKCD…WRDH, YKCD…KKIH, YKCY…MRVH, YVCS…QRVH, FKCE…QRVH, YKCY…QRVH, YRCC…QRVH, and FKCD…QRVH. Residue Lys-257 forms a Glycyl lysine isopeptide (Lys-Gly) (interchain with G-Cter in SUMO2) linkage.

This sequence belongs to the krueppel C2H2-type zinc-finger protein family.

The protein resides in the nucleus. In terms of biological role, may be involved in transcriptional regulation. This Mus musculus (Mouse) protein is Zinc finger protein 664 (Znf664).